We begin with the raw amino-acid sequence, 96 residues long: Large ribosomal subunit protein uL23 (96 aa).

Belongs to the universal ribosomal protein uL23 family. Part of the 50S ribosomal subunit. Contacts protein L29, and trigger factor when it is bound to the ribosome.

One of the early assembly proteins it binds 23S rRNA. One of the proteins that surrounds the polypeptide exit tunnel on the outside of the ribosome. Forms the main docking site for trigger factor binding to the ribosome. In Oleidesulfovibrio alaskensis (strain ATCC BAA-1058 / DSM 17464 / G20) (Desulfovibrio alaskensis), this protein is Large ribosomal subunit protein uL23.